A 638-amino-acid polypeptide reads, in one-letter code: Zinc finger protein 143 (638 aa).

The residue at position 1 (M1) is an N-acetylmethionine. Residue K213 forms a Glycyl lysine isopeptide (Lys-Gly) (interchain with G-Cter in SUMO2) linkage. 4 C2H2-type zinc fingers span residues 237–261 (FRCE…ERSH), 267–291 (YQCE…VRTH), 297–321 (YRCS…IRTH), and 327–351 (FKCP…VRTH). At T352 the chain carries Phosphothreonine. 3 C2H2-type zinc fingers span residues 357 to 381 (YYCT…VRIH), 387 to 411 (YVCT…HVVH), and 417 to 440 (YNCN…RTAH). K406 is covalently cross-linked (Glycyl lysine isopeptide (Lys-Gly) (interchain with G-Cter in SUMO2)).

This sequence belongs to the GLI C2H2-type zinc-finger protein family. In terms of assembly, interacts with CHD8. Forms a complex with HCFC1 and ZNF143. As to expression, expressed in all tissues tested, with the strongest expression in ovary.

Its subcellular location is the nucleus. In terms of biological role, transcriptional activator. Activates the gene for selenocysteine tRNA (tRNAsec). Binds to the SPH motif of small nuclear RNA (snRNA) gene promoters. Participates in efficient U6 RNA polymerase III transcription via its interaction with CHD8. In complex with HCFC1 and ZNF143, regulates the expression of several genes, including AP2S1, ESCO2, OPHN1, RBL1, UBXN8 and ZNF32. This Homo sapiens (Human) protein is Zinc finger protein 143 (ZNF143).